A 306-amino-acid chain; its full sequence is tRNA pseudouridine synthase B (306 aa).

The Nucleophile role is filled by D47.

The protein belongs to the pseudouridine synthase TruB family. Type 1 subfamily.

The catalysed reaction is uridine(55) in tRNA = pseudouridine(55) in tRNA. Responsible for synthesis of pseudouridine from uracil-55 in the psi GC loop of transfer RNAs. This Neisseria meningitidis serogroup A / serotype 4A (strain DSM 15465 / Z2491) protein is tRNA pseudouridine synthase B.